The sequence spans 341 residues: L-threonine 3-dehydrogenase (341 aa).

Zn(2+) is bound at residue C38. Active-site charge relay system residues include T40 and H43. Positions 63, 64, 93, 96, 99, and 107 each coordinate Zn(2+). NAD(+) contacts are provided by residues I175, D195, R200, 262–264 (LGI), and 286–287 (IY).

This sequence belongs to the zinc-containing alcohol dehydrogenase family. As to quaternary structure, homotetramer. Zn(2+) is required as a cofactor.

Its subcellular location is the cytoplasm. The catalysed reaction is L-threonine + NAD(+) = (2S)-2-amino-3-oxobutanoate + NADH + H(+). Its pathway is amino-acid degradation; L-threonine degradation via oxydo-reductase pathway; glycine from L-threonine: step 1/2. In terms of biological role, catalyzes the NAD(+)-dependent oxidation of L-threonine to 2-amino-3-ketobutyrate. The chain is L-threonine 3-dehydrogenase from Shewanella oneidensis (strain ATCC 700550 / JCM 31522 / CIP 106686 / LMG 19005 / NCIMB 14063 / MR-1).